The sequence spans 351 residues: MFTFFTILSLCFKSWEQIITMEASKEAHHLPNYMKDDNVSQETKNLITSLPSDKDFMGYGLYNYKGCWYYPNTLQAVLDVQKHFKPRDTDIILASLPKGGTTWLKSLIFAVVHREKYRGTPQTHPLLLQNPHDLVPFLEVELYANSQIPDLAKYSSPMIFSTHMHLQALREATTKACKTVYVCRGIKDTFVSGWHYRNMLHRTKMDQATFELMFDAYCRGVLLYGPYWEHVLSYWKGSLEAKENVLFMKYEEIIEEPRVQVKRLAEFLECPFTKEEEESGSVEEILKLCSLRNLSNLEVNKNGTTRIGVDSQVFFRKGEVGDWKNHLTPQMAKTFDEIIDYRLGDSGLIFQ.

Lys98–Trp103 contacts 3'-phosphoadenylyl sulfate. His163 functions as the Proton acceptor in the catalytic mechanism. 3'-phosphoadenylyl sulfate contacts are provided by residues Arg184, Ser192, Tyr250, and Arg316–Gly318.

Belongs to the sulfotransferase 1 family.

It is found in the cytoplasm. Functionally, sulfotransferase that utilizes 3'-phospho-5'-adenylyl sulfate (PAPS) as sulfonate donor. This chain is Cytosolic sulfotransferase 11 (SOT11), found in Arabidopsis thaliana (Mouse-ear cress).